The following is a 549-amino-acid chain: Arginine--tRNA ligase (549 aa).

The 'HIGH' region motif lies at 113-123; sequence ANPDGPLHIGH.

This sequence belongs to the class-I aminoacyl-tRNA synthetase family.

The protein localises to the cytoplasm. The catalysed reaction is tRNA(Arg) + L-arginine + ATP = L-arginyl-tRNA(Arg) + AMP + diphosphate. This is Arginine--tRNA ligase (argS) from Archaeoglobus fulgidus (strain ATCC 49558 / DSM 4304 / JCM 9628 / NBRC 100126 / VC-16).